A 600-amino-acid chain; its full sequence is Aspartate--tRNA(Asp/Asn) ligase (600 aa).

Glutamate 174 provides a ligand contact to L-aspartate. The interval 198-201 (QLFK) is aspartate. Arginine 220 lines the L-aspartate pocket. Residues 220-222 (RDE) and glutamine 229 each bind ATP. An L-aspartate-binding site is contributed by histidine 457. Residue glutamate 491 coordinates ATP. Residue arginine 498 coordinates L-aspartate. 543–546 (GLDR) provides a ligand contact to ATP.

This sequence belongs to the class-II aminoacyl-tRNA synthetase family. Type 1 subfamily. Homodimer.

Its subcellular location is the cytoplasm. The catalysed reaction is tRNA(Asx) + L-aspartate + ATP = L-aspartyl-tRNA(Asx) + AMP + diphosphate. Functionally, aspartyl-tRNA synthetase with relaxed tRNA specificity since it is able to aspartylate not only its cognate tRNA(Asp) but also tRNA(Asn). Reaction proceeds in two steps: L-aspartate is first activated by ATP to form Asp-AMP and then transferred to the acceptor end of tRNA(Asp/Asn). The chain is Aspartate--tRNA(Asp/Asn) ligase from Burkholderia multivorans (strain ATCC 17616 / 249).